The chain runs to 318 residues: Ubiquitin-conjugating enzyme E2 J1 (318 aa).

Residues 1 to 282 (METRYNLKSP…QGQPPRAHHT (282 aa)) are Cytoplasmic-facing. In terms of domain architecture, UBC core spans 10–168 (PAVKRLMKEA…VLLPLKSGSG (159 aa)). Residue cysteine 91 is the Glycyl thioester intermediate of the active site. At serine 184 the chain carries Phosphoserine. Residues 215 to 233 (PTTFQGATASTSYGAQNPS) are compositionally biased toward polar residues. The disordered stretch occupies residues 215-283 (PTTFQGATAS…GQPPRAHHTE (69 aa)). Residues 249 to 269 (SMSPRQRRAQQQSQRRPSTSP) are compositionally biased toward low complexity. Phosphoserine occurs at positions 266 and 268. A helical; Anchor for type IV membrane protein transmembrane segment spans residues 283–303 (EHGGSAMLIIILTLALAALIF). Residues 304–318 (RRIYLANEYIFDFEL) lie on the Lumenal side of the membrane.

It belongs to the ubiquitin-conjugating enzyme family. As to quaternary structure, component of the HRD1 complex, which comprises at least SYNV1/HRD1, DERL1/2, FAM8A1, HERPUD1/HERP, OS9, SEL1L and UBE2J1. Interacts with E3 ligase RNF26. Interacts with E3 ligase RNF133. Phosphorylated at Ser-184 in a cytosolic stress-dependent manner by MAP kinase p38 MAPKAPK2. In terms of processing, phosphorylated UBE2J1 is rapidly ubiquitinated and subsequently degraded by the proteasome.

It localises to the endoplasmic reticulum membrane. The enzyme catalyses S-ubiquitinyl-[E1 ubiquitin-activating enzyme]-L-cysteine + [E2 ubiquitin-conjugating enzyme]-L-cysteine = [E1 ubiquitin-activating enzyme]-L-cysteine + S-ubiquitinyl-[E2 ubiquitin-conjugating enzyme]-L-cysteine.. Its pathway is protein modification; protein ubiquitination. In terms of biological role, catalyzes the covalent attachment of ubiquitin to other proteins. Functions in the selective degradation of misfolded membrane proteins from the endoplasmic reticulum (ERAD) and is essential for cells to recover from ER stress. Plays a role in MAPKAPK2-dependent translational control of TNF-alpha synthesis. Also acts as a platform for perinuclear positioning of the endosomal system by mediating ubiquitination of SQSTM1 through interaction with the E3 ubiquitin-protein ligase RNF26. Plays a role in male fecundity through the interaction with the E3 ubiquitin-protein ligase RNF133. This is Ubiquitin-conjugating enzyme E2 J1 (Ube2j1) from Mus musculus (Mouse).